Here is a 198-residue protein sequence, read N- to C-terminus: ATP-dependent Clp protease proteolytic subunit (198 aa).

Residue Ser101 is the Nucleophile of the active site. His126 is an active-site residue.

This sequence belongs to the peptidase S14 family. Component of the chloroplastic Clp protease core complex.

The protein resides in the plastid. Its subcellular location is the chloroplast stroma. The enzyme catalyses Hydrolysis of proteins to small peptides in the presence of ATP and magnesium. alpha-casein is the usual test substrate. In the absence of ATP, only oligopeptides shorter than five residues are hydrolyzed (such as succinyl-Leu-Tyr-|-NHMec, and Leu-Tyr-Leu-|-Tyr-Trp, in which cleavage of the -Tyr-|-Leu- and -Tyr-|-Trp bonds also occurs).. Functionally, cleaves peptides in various proteins in a process that requires ATP hydrolysis. Has a chymotrypsin-like activity. Plays a major role in the degradation of misfolded proteins. This chain is ATP-dependent Clp protease proteolytic subunit, found in Psilotum nudum (Whisk fern).